The following is a 205-amino-acid chain: Low-density lipoprotein receptor class A domain-containing protein 1 (205 aa).

The helical transmembrane segment at 43–63 (LLLLLATVAALIALVTILGLP) threads the bilayer. Residues 71 to 114 (ACITLTNRTGFLCHDQRSCIPASGVCDGVRTCTHGEDEDESLCR) form the LDL-receptor class A 1 domain. Intrachain disulfides connect cysteine 72/cysteine 89, cysteine 83/cysteine 102, cysteine 96/cysteine 113, cysteine 141/cysteine 160, cysteine 163/cysteine 180, and cysteine 170/cysteine 193. The region spanning 115 to 161 (DVPQSLPHFLVAHCGDPASWIYSDQKCDGTNNCGDCSDELSPVTVCP) is the LDL-receptor class A 2; atypical domain. In terms of domain architecture, LDL-receptor class A 3; atypical spans 162-203 (PCGPGWWRCPSTFFKYCDCIPRHLCRDHVQHCSDWSDEYACP).

The protein belongs to the LDLR family.

The protein localises to the membrane. This Homo sapiens (Human) protein is Low-density lipoprotein receptor class A domain-containing protein 1 (LDLRAD1).